We begin with the raw amino-acid sequence, 459 residues long: Trigger factor (459 aa).

The PPIase FKBP-type domain maps to 161–246; the sequence is GDKVVIDFQG…IKKIMEGKLP (86 aa).

The protein belongs to the FKBP-type PPIase family. Tig subfamily.

Its subcellular location is the cytoplasm. The enzyme catalyses [protein]-peptidylproline (omega=180) = [protein]-peptidylproline (omega=0). Involved in protein export. Acts as a chaperone by maintaining the newly synthesized protein in an open conformation. Functions as a peptidyl-prolyl cis-trans isomerase. The protein is Trigger factor of Legionella pneumophila (strain Corby).